A 108-amino-acid chain; its full sequence is FK506-binding protein 1 (108 aa).

Residues 20 to 108 (GDAVTIHYVG…VFDVELLGIN (89 aa)) form the PPIase FKBP-type domain.

It belongs to the FKBP-type PPIase family. FKBP1 subfamily.

It localises to the cytoplasm. It carries out the reaction [protein]-peptidylproline (omega=180) = [protein]-peptidylproline (omega=0). Its activity is regulated as follows. Inhibited by both FK506 and rapamycin. PPIases accelerate the folding of proteins. It catalyzes the cis-trans isomerization of proline imidic peptide bonds in oligopeptides. The sequence is that of FK506-binding protein 1 (FPR1) from Yarrowia lipolytica (strain CLIB 122 / E 150) (Yeast).